We begin with the raw amino-acid sequence, 365 residues long: MSLEEKKTTESKEKDKALSLVLGQIERNFGRGSIMRLGDASRMKVETISTGALTLDLALGGGYPKGRVVEVYGPESSGKTTLTLHAIAEVQKNGGVAAFVDAEHALDPVYAASLGVDVENLLVSQPDTGEMALEIVDQLIRSSAVDLVVVDSVAALTPRAEIEGEMGDHVIGSQARLMSQAMRKITGNIGKSGCTVIFLNQLRLKIGITYGNPETTTGGNALKFYASVRLDIRRIQTLKRGTEEYGIRAKVKVAKNKVAPPFRIAEFDILFGKGISTTGCLLDLAEETNIIIRRGAWYSYEGENIGQGRDNTIIWLDQNLEIKNKVESMIKEKLTEGTEVSSNSMKALNSNPTSTIAVNDIKTVA.

Position 73–80 (73–80) interacts with ATP; the sequence is GPESSGKT.

The protein belongs to the RecA family.

It localises to the cytoplasm. Its function is as follows. Can catalyze the hydrolysis of ATP in the presence of single-stranded DNA, the ATP-dependent uptake of single-stranded DNA by duplex DNA, and the ATP-dependent hybridization of homologous single-stranded DNAs. It interacts with LexA causing its activation and leading to its autocatalytic cleavage. The polypeptide is Protein RecA (Prochlorococcus marinus (strain MIT 9215)).